A 190-amino-acid polypeptide reads, in one-letter code: Heme-binding protein 1 (190 aa).

The protein belongs to the HEBP family. As to quaternary structure, monomer.

It is found in the cytoplasm. May bind free porphyrinogens that may be present in the cell and thus facilitate removal of these potentially toxic compound. Binds with a high affinity to one molecule of heme or porphyrins. It binds metalloporphyrins, free porphyrins and N-methylprotoporphyrin with similar affinities. This chain is Heme-binding protein 1 (hebp1), found in Xenopus laevis (African clawed frog).